The sequence spans 495 residues: Cytochrome P450 2E1 (495 aa).

298 to 303 (FAGTET) serves as a coordination point for substrate. Cys437 provides a ligand contact to heme.

The protein belongs to the cytochrome P450 family. Interacts with chaperones HSP70 and HSP90; this interaction is required for initial targeting to mitochondria. Heme is required as a cofactor.

It localises to the endoplasmic reticulum membrane. The protein localises to the microsome membrane. Its subcellular location is the mitochondrion inner membrane. The catalysed reaction is an organic molecule + reduced [NADPH--hemoprotein reductase] + O2 = an alcohol + oxidized [NADPH--hemoprotein reductase] + H2O + H(+). The enzyme catalyses (5Z,8Z,11Z)-eicosatrienoate + reduced [NADPH--hemoprotein reductase] + O2 = 19-hydroxy-(5Z,8Z,11Z)-eicosatrienoate + oxidized [NADPH--hemoprotein reductase] + H2O + H(+). It catalyses the reaction (5Z,8Z,11Z,14Z,17Z)-eicosapentaenoate + reduced [NADPH--hemoprotein reductase] + O2 = 19-hydroxy-(5Z,8Z,11Z,14Z,17Z)-eicosapentaenoate + oxidized [NADPH--hemoprotein reductase] + H2O + H(+). It carries out the reaction (4Z,7Z,10Z,13Z,16Z,19Z)-docosahexaenoate + reduced [NADPH--hemoprotein reductase] + O2 = 21-hydroxy-(4Z,7Z,10Z,13Z,16Z,19Z)-docosahexaenoate + oxidized [NADPH--hemoprotein reductase] + H2O + H(+). The catalysed reaction is dodecanoate + reduced [NADPH--hemoprotein reductase] + O2 = 11-hydroxydodecanoate + oxidized [NADPH--hemoprotein reductase] + H2O + H(+). The enzyme catalyses tetradecanoate + reduced [NADPH--hemoprotein reductase] + O2 = 13-hydroxytetradecanoate + oxidized [NADPH--hemoprotein reductase] + H2O + H(+). It catalyses the reaction 4-nitrophenol + NADPH + O2 + H(+) = 4-nitrocatechol + NADP(+) + H2O. Its pathway is lipid metabolism; fatty acid metabolism. Its activity is regulated as follows. The omega-1 hydroxylase activity is stimulated by cytochrome b5. A cytochrome P450 monooxygenase involved in the metabolism of fatty acids. Mechanistically, uses molecular oxygen inserting one oxygen atom into a substrate, and reducing the second into a water molecule, with two electrons provided by NADPH via cytochrome P450 reductase (NADPH--hemoprotein reductase). Catalyzes the hydroxylation of carbon-hydrogen bonds. Hydroxylates fatty acids specifically at the omega-1 position displaying the highest catalytic activity for saturated fatty acids. May be involved in the oxidative metabolism of xenobiotics. The chain is Cytochrome P450 2E1 (CYP2E1) from Bos taurus (Bovine).